A 473-amino-acid chain; its full sequence is Photosystem II CP43 reaction center protein (473 aa).

A propeptide spanning residues 1 to 14 is cleaved from the precursor; sequence MKTLYSLRRSYPVE. Residue Thr-15 is modified to N-acetylthreonine. A Phosphothreonine modification is found at Thr-15. 5 helical membrane passes run 69 to 93, 134 to 155, 178 to 200, 255 to 275, and 291 to 312; these read LFEV…PHLA, LIGP…KDRN, KALY…RKIT, KPFA…LSYS, and WFNN…ASQA. Residue Glu-367 coordinates [CaMn4O5] cluster. A helical transmembrane segment spans residues 447–471; that stretch reads RARAAAAGFEKGIDRDFEPVLSMTP.

Belongs to the PsbB/PsbC family. PsbC subfamily. In terms of assembly, PSII is composed of 1 copy each of membrane proteins PsbA, PsbB, PsbC, PsbD, PsbE, PsbF, PsbH, PsbI, PsbJ, PsbK, PsbL, PsbM, PsbT, PsbX, PsbY, PsbZ, Psb30/Ycf12, at least 3 peripheral proteins of the oxygen-evolving complex and a large number of cofactors. It forms dimeric complexes. It depends on Binds multiple chlorophylls and provides some of the ligands for the Ca-4Mn-5O cluster of the oxygen-evolving complex. It may also provide a ligand for a Cl- that is required for oxygen evolution. PSII binds additional chlorophylls, carotenoids and specific lipids. as a cofactor.

The protein resides in the plastid. It localises to the chloroplast thylakoid membrane. One of the components of the core complex of photosystem II (PSII). It binds chlorophyll and helps catalyze the primary light-induced photochemical processes of PSII. PSII is a light-driven water:plastoquinone oxidoreductase, using light energy to abstract electrons from H(2)O, generating O(2) and a proton gradient subsequently used for ATP formation. In Pinus thunbergii (Japanese black pine), this protein is Photosystem II CP43 reaction center protein.